The primary structure comprises 1371 residues: Serine protease pic autotransporter (1371 aa).

A signal peptide spans 1-55 (MNKVYSLKYCPVTGGLIVVSELASRVIKKTCRRLTHILLAGIPAVYLYYPQISQA). Positions 56–301 (GIVRSDIAYQ…NVIPTDYLNQ (246 aa)) constitute a Peptidase S6 domain. Active-site charge relay system residues include His127, Asp155, and Ser258. The region spanning 1105–1371 (DTNGDAGAWA…AVNANFRYMF (267 aa)) is the Autotransporter domain.

Cleaved to release the mature protein from the outer membrane.

It localises to the periplasm. Its subcellular location is the secreted. The protein resides in the cell surface. The protein localises to the cell outer membrane. Its function is as follows. Involved in virulence of uropathogenic E.coli although it is not known how it contributes to it. Has no mucinase activity. The sequence is that of Serine protease pic autotransporter (pic) from Escherichia coli O6:H1 (strain CFT073 / ATCC 700928 / UPEC).